We begin with the raw amino-acid sequence, 96 residues long: MNLRPLQDRIIVKRVEEATMTAGGLYIPETAKEKPQQGEVVAVGNGKRGDDGKVYPIDLKVGDKVLFGKYAGSEVKLEGEDFLIMREDDILGVVEK.

This sequence belongs to the GroES chaperonin family. In terms of assembly, heptamer of 7 subunits arranged in a ring. Interacts with the chaperonin GroEL.

The protein resides in the cytoplasm. Its function is as follows. Together with the chaperonin GroEL, plays an essential role in assisting protein folding. The GroEL-GroES system forms a nano-cage that allows encapsulation of the non-native substrate proteins and provides a physical environment optimized to promote and accelerate protein folding. GroES binds to the apical surface of the GroEL ring, thereby capping the opening of the GroEL channel. This chain is Co-chaperonin GroES, found in Geobacter sp. (strain M21).